Here is a 227-residue protein sequence, read N- to C-terminus: A-type potassium channel modulatory protein KCNIP1 (227 aa).

Positions 38-94 (LEMTMVCHRPEGLEQLEAQTNFTKRELQVLYRGFKNECPSGVVNEDTFKQIYAQFFP) constitute an EF-hand 1; degenerate domain. EF-hand domains are found at residues 97 to 132 (DASTYAHYLFNAFDTTQTGSVKFEDFVTALSILLRG), 133 to 168 (TVHEKLRWTFNLYDINKDGYINKEEMMDIVKAIYDM), and 181 to 216 (TPRQHVDVFFQKMDKNKDGIVTLDEFLESCQEDDNI). Ca(2+)-binding residues include Asp146, Asn148, Asp150, Tyr152, Glu157, Asp194, Asn196, Asp198, and Glu205. The tract at residues 214-227 (DNIMRSLQLFQNVM) is interaction with KCND2.

This sequence belongs to the recoverin family. Component of heteromultimeric potassium channels. Identified in potassium channel complexes containing KCND1, KCND2, KCND3, KCNIP1, KCNIP2, KCNIP3, KCNIP4, DPP6 and DPP10. Part of a heterooctamer composed of the tetrameric channel and four KCNIP1 chains. Probably part of a complex consisting of KCNIP1, KCNIP2 isoform 3 and KCND2. Self-associates to form homodimers and homotetramers. Interacts with KCNIP2 isoform 3 in a calcium-dependent manner. Interacts with Naja atra venom CTX3. Interacts with KCND2; this interaction mediates the capture of both the N- and C-terminus of KCND2, thus preventing KCND2 N-type inactivation and modulates the channel gating kinetics. Interacts with KCND3; each KCNIP1 monomer interacts with two adjacent KCND3 subunits, through both the N-terminal inactivation ball of a KCND3 subunit and a C-terminal helix from the adjacent KCND3 subunit, clamping them together; this interaction stabilizes the tetrameric form and modulates the channel gating kinetics namely channel activation and inactivation kinetics and rate of recovery from inactivation. In terms of tissue distribution, isoform 1 and isoform 2 are expressed in brain and kidney. Isoform 1 is also expressed in liver, pancreas, skeletal muscle, small intestine and testis. Isoform 2 is also expressed in lung, pancreas, leukocytes, prostate and thymus.

It is found in the cell membrane. The protein localises to the cytoplasm. The protein resides in the cell projection. It localises to the dendrite. Regulatory subunit of Kv4/D (Shal)-type voltage-gated rapidly inactivating A-type potassium channels. Regulates channel density, inactivation kinetics and rate of recovery from inactivation in a calcium-dependent and isoform-specific manner. In vitro, modulates KCND1/Kv4.1 and KCND2/Kv4.2 currents. Increases the presence of KCND2 at the cell surface. The polypeptide is A-type potassium channel modulatory protein KCNIP1 (Homo sapiens (Human)).